A 1016-amino-acid polypeptide reads, in one-letter code: UvrABC system protein A (1016 aa).

32–39 (GVSGSGKS) lines the ATP pocket. Residues 259 to 286 (CPEHGSVLEELEPRSFSFNSPYGACGDC) form a C4-type zinc finger. ABC transporter domains are found at residues 315 to 627 (WTKK…KNSL) and 647 to 975 (GNGK…EYLR). Residue 679–686 (GPSGSGKS) coordinates ATP. The C4-type zinc-finger motif lies at 778-804 (CEHCKGDGVMKIEMNFLPDIYVPCEVC). Positions 984–1016 (EPRARGEKAEKPAKAKAPAKKRTKKQTELVEAD) are disordered. Residues 985–996 (PRARGEKAEKPA) show a composition bias toward basic and acidic residues.

The protein belongs to the ABC transporter superfamily. UvrA family. Forms a heterotetramer with UvrB during the search for lesions.

Its subcellular location is the cytoplasm. Functionally, the UvrABC repair system catalyzes the recognition and processing of DNA lesions. UvrA is an ATPase and a DNA-binding protein. A damage recognition complex composed of 2 UvrA and 2 UvrB subunits scans DNA for abnormalities. When the presence of a lesion has been verified by UvrB, the UvrA molecules dissociate. The sequence is that of UvrABC system protein A from Deinococcus radiodurans (strain ATCC 13939 / DSM 20539 / JCM 16871 / CCUG 27074 / LMG 4051 / NBRC 15346 / NCIMB 9279 / VKM B-1422 / R1).